We begin with the raw amino-acid sequence, 371 residues long: Putative glutamate--cysteine ligase 2 (371 aa).

Belongs to the glutamate--cysteine ligase type 2 family. YbdK subfamily.

The catalysed reaction is L-cysteine + L-glutamate + ATP = gamma-L-glutamyl-L-cysteine + ADP + phosphate + H(+). Functionally, ATP-dependent carboxylate-amine ligase which exhibits weak glutamate--cysteine ligase activity. The protein is Putative glutamate--cysteine ligase 2 of Cupriavidus taiwanensis (strain DSM 17343 / BCRC 17206 / CCUG 44338 / CIP 107171 / LMG 19424 / R1) (Ralstonia taiwanensis (strain LMG 19424)).